We begin with the raw amino-acid sequence, 498 residues long: Glutamate--tRNA ligase (498 aa).

Residues 11-21 carry the 'HIGH' region motif; it reads PSPTGHLHIGN. The 'KMSKS' region signature appears at 260-264; the sequence is KLSKR. An ATP-binding site is contributed by Lys263.

Belongs to the class-I aminoacyl-tRNA synthetase family. Glutamate--tRNA ligase type 1 subfamily. Monomer.

It localises to the cytoplasm. The catalysed reaction is tRNA(Glu) + L-glutamate + ATP = L-glutamyl-tRNA(Glu) + AMP + diphosphate. Its function is as follows. Catalyzes the attachment of glutamate to tRNA(Glu) in a two-step reaction: glutamate is first activated by ATP to form Glu-AMP and then transferred to the acceptor end of tRNA(Glu). The sequence is that of Glutamate--tRNA ligase from Leuconostoc citreum (strain KM20).